A 591-amino-acid chain; its full sequence is Aspartate--tRNA(Asp/Asn) ligase (591 aa).

L-aspartate is bound at residue glutamate 174. Residues 198-201 (QLFK) are aspartate. Position 220 (arginine 220) interacts with L-aspartate. ATP contacts are provided by residues 220-222 (RDE) and glutamine 229. Histidine 450 lines the L-aspartate pocket. Residue glutamate 483 participates in ATP binding. L-aspartate is bound at residue arginine 490. 535 to 538 (GLDR) contacts ATP.

This sequence belongs to the class-II aminoacyl-tRNA synthetase family. Type 1 subfamily. In terms of assembly, homodimer.

It is found in the cytoplasm. The catalysed reaction is tRNA(Asx) + L-aspartate + ATP = L-aspartyl-tRNA(Asx) + AMP + diphosphate. Functionally, aspartyl-tRNA synthetase with relaxed tRNA specificity since it is able to aspartylate not only its cognate tRNA(Asp) but also tRNA(Asn). Reaction proceeds in two steps: L-aspartate is first activated by ATP to form Asp-AMP and then transferred to the acceptor end of tRNA(Asp/Asn). The polypeptide is Aspartate--tRNA(Asp/Asn) ligase (Pseudomonas putida (strain ATCC 700007 / DSM 6899 / JCM 31910 / BCRC 17059 / LMG 24140 / F1)).